The sequence spans 33 residues: Large ribosomal subunit protein eL21 (33 aa).

Belongs to the eukaryotic ribosomal protein eL21 family. Component of the large ribosomal subunit.

The protein resides in the cytoplasm. It is found in the cytosol. The protein localises to the endoplasmic reticulum. Component of the large ribosomal subunit. The ribosome is a large ribonucleoprotein complex responsible for the synthesis of proteins in the cell. This chain is Large ribosomal subunit protein eL21 (rpl21), found in Xenopus laevis (African clawed frog).